Here is a 144-residue protein sequence, read N- to C-terminus: MKTLLLLAVIMIFGLLQAHGNLVNFHRMIKLTTGKEAALSYGFYGCHCGVGGRGSPKDATDRCCVTHDCCYKRLEKRGCGTKFLSYKFSNSGSRITCAKQDSCRSQLCECDKAAATCFARNKTTYNKKYQYYSNKHCRGSTPRC.

The signal sequence occupies residues 1–20; sequence MKTLLLLAVIMIFGLLQAHG. Intrachain disulfides connect Cys46-Cys137, Cys48-Cys64, Cys63-Cys117, Cys69-Cys144, Cys70-Cys110, Cys79-Cys103, and Cys97-Cys108. Residues His47, Gly49, and Gly51 each coordinate Ca(2+). His67 is a catalytic residue. Asp68 is a Ca(2+) binding site. Residue Asp111 is part of the active site.

This sequence belongs to the phospholipase A2 family. Ca(2+) is required as a cofactor. Expressed in various tissues including heart, kidney, liver, lung, pancreas, placenta, skeletal muscle, prostate, ovary, colon and small intestine. Not detected in lymphoid organs and brain. Expressed in platelets (at protein level).

The protein localises to the secreted. The protein resides in the cell membrane. It localises to the mitochondrion outer membrane. It catalyses the reaction a 1,2-diacyl-sn-glycero-3-phosphoethanolamine + H2O = a 1-acyl-sn-glycero-3-phosphoethanolamine + a fatty acid + H(+). The enzyme catalyses 1-hexadecanoyl-2-(9Z-octadecenoyl)-sn-glycero-3-phosphoethanolamine + H2O = 1-hexadecanoyl-sn-glycero-3-phosphoethanolamine + (9Z)-octadecenoate + H(+). The catalysed reaction is 1-hexadecanoyl-2-(9Z,12Z-octadecadienoyl)-sn-glycero-3-phosphoethanolamine + H2O = 1-hexadecanoyl-sn-glycero-3-phosphoethanolamine + (9Z,12Z)-octadecadienoate + H(+). It carries out the reaction 1-hexadecanoyl-2-(5Z,8Z,11Z,14Z-eicosatetraenoyl)-sn-glycero-3-phosphoethanolamine + H2O = 1-hexadecanoyl-sn-glycero-3-phosphoethanolamine + (5Z,8Z,11Z,14Z)-eicosatetraenoate + H(+). It catalyses the reaction N-hexadecanoyl-1,2-di-(9Z-octadecenoyl)-sn-glycero-3-phosphoethanolamine + H2O = N-hexadecanoyl-1-(9Z-octadecenoyl)-sn-glycero-3-phosphoethanolamine + (9Z)-octadecenoate + H(+). The enzyme catalyses 1,2-dihexadecanoyl-sn-glycero-3-phospho-(1'-sn-glycerol) + H2O = 1-hexadecanoyl-sn-glycero-3-phospho-(1'-sn-glycerol) + hexadecanoate + H(+). The catalysed reaction is 1-hexadecanoyl-2-(9Z-octadecenoyl)-sn-glycero-3-phosphoglycerol + H2O = 1-hexadecanoyl-sn-glycero-3-phosphoglycerol + (9Z)-octadecenoate + H(+). It carries out the reaction 1-hexadecanoyl-2-(9Z-octadecenoyl)-sn-glycero-3-phospho-(1'-sn-glycerol) + H2O = 1-hexadecanoyl-sn-glycero-3-phospho-(1'-sn-glycerol) + (9Z)-octadecenoate + H(+). It catalyses the reaction a 1,2-diacyl-sn-glycero-3-phosphocholine + H2O = a 1-acyl-sn-glycero-3-phosphocholine + a fatty acid + H(+). The enzyme catalyses 1,2-dihexadecanoyl-sn-glycero-3-phosphocholine + H2O = 1-hexadecanoyl-sn-glycero-3-phosphocholine + hexadecanoate + H(+). The catalysed reaction is 1-hexadecanoyl-2-(9Z-octadecenoyl)-sn-glycero-3-phosphocholine + H2O = 1-hexadecanoyl-sn-glycero-3-phosphocholine + (9Z)-octadecenoate + H(+). It carries out the reaction 1-hexadecanoyl-2-(9Z,12Z-octadecadienoyl)-sn-glycero-3-phosphocholine + H2O = (9Z,12Z)-octadecadienoate + 1-hexadecanoyl-sn-glycero-3-phosphocholine + H(+). It catalyses the reaction 1-hexadecanoyl-2-(4Z,7Z,10Z,13Z,16Z,19Z-docosahexaenoyl)-sn-glycero-3-phosphocholine + H2O = (4Z,7Z,10Z,13Z,16Z,19Z)-docosahexaenoate + 1-hexadecanoyl-sn-glycero-3-phosphocholine + H(+). In terms of biological role, secretory calcium-dependent phospholipase A2 that primarily targets extracellular phospholipids with implications in host antimicrobial defense, inflammatory response and tissue regeneration. Hydrolyzes the ester bond of the fatty acyl group attached at sn-2 position of phospholipids (phospholipase A2 activity) with preference for phosphatidylethanolamines and phosphatidylglycerols over phosphatidylcholines. Contributes to lipid remodeling of cellular membranes and generation of lipid mediators involved in pathogen clearance. Displays bactericidal activity against Gram-positive bacteria by directly hydrolyzing phospholipids of the bacterial membrane. Upon sterile inflammation, targets membrane phospholipids of extracellular mitochondria released from activated platelets, generating free unsaturated fatty acids such as arachidonate that is used by neighboring leukocytes to synthesize inflammatory eicosanoids such as leukotrienes. Simultaneously, by compromising mitochondrial membrane integrity, promotes the release in circulation of potent damage-associated molecular pattern molecules that activate the innate immune response. Plays a stem cell regulator role in the intestinal crypt. Within intracellular compartment mediates Paneth cell differentiation and its stem cell supporting functions by inhibiting Wnt signaling pathway in intestinal stem cell (ICS). Secreted in the intestinal lumen upon inflammation, acts in an autocrine way and promotes prostaglandin E2 synthesis that stimulates Wnt signaling pathway in ICS cells and tissue regeneration. May play a role in the biosynthesis of N-acyl ethanolamines that regulate energy metabolism and inflammation. Hydrolyzes N-acyl phosphatidylethanolamines to N-acyl lysophosphatidylethanolamines, which are further cleaved by a lysophospholipase D to release N-acyl ethanolamines. Independent of its catalytic activity, acts as a ligand for integrins. Binds to and activates integrins ITGAV:ITGB3, ITGA4:ITGB1 and ITGA5:ITGB1. Binds to a site (site 2) which is distinct from the classical ligand-binding site (site 1) and induces integrin conformational changes and enhanced ligand binding to site 1. Induces cell proliferation in an integrin-dependent manner. The sequence is that of Phospholipase A2, membrane associated (PLA2G2A) from Homo sapiens (Human).